The following is a 337-amino-acid chain: DNA-directed RNA polymerase subunit alpha (337 aa).

Positions 1–233 (MVREEVVGST…DLFIPFLHAE (233 aa)) are alpha N-terminal domain (alpha-NTD). Positions 265–337 (KEIALKCIFI…FAIDLPKNKF (73 aa)) are alpha C-terminal domain (alpha-CTD).

The protein belongs to the RNA polymerase alpha chain family. In plastids the minimal PEP RNA polymerase catalytic core is composed of four subunits: alpha, beta, beta', and beta''. When a (nuclear-encoded) sigma factor is associated with the core the holoenzyme is formed, which can initiate transcription.

The protein localises to the plastid. It is found in the chloroplast. The enzyme catalyses RNA(n) + a ribonucleoside 5'-triphosphate = RNA(n+1) + diphosphate. DNA-dependent RNA polymerase catalyzes the transcription of DNA into RNA using the four ribonucleoside triphosphates as substrates. The sequence is that of DNA-directed RNA polymerase subunit alpha from Acorus gramineus (Dwarf sweet flag).